A 639-amino-acid polypeptide reads, in one-letter code: Elongation factor 4 (639 aa).

Residues Thr39–Val221 enclose the tr-type G domain. GTP contacts are provided by residues Asp51 to Thr56 and Asn168 to Asp171.

The protein belongs to the TRAFAC class translation factor GTPase superfamily. Classic translation factor GTPase family. LepA subfamily.

It is found in the cell membrane. The enzyme catalyses GTP + H2O = GDP + phosphate + H(+). Its function is as follows. Required for accurate and efficient protein synthesis under certain stress conditions. May act as a fidelity factor of the translation reaction, by catalyzing a one-codon backward translocation of tRNAs on improperly translocated ribosomes. Back-translocation proceeds from a post-translocation (POST) complex to a pre-translocation (PRE) complex, thus giving elongation factor G a second chance to translocate the tRNAs correctly. Binds to ribosomes in a GTP-dependent manner. The protein is Elongation factor 4 of Frankia casuarinae (strain DSM 45818 / CECT 9043 / HFP020203 / CcI3).